We begin with the raw amino-acid sequence, 267 residues long: Acetyl-coenzyme A carboxylase carboxyl transferase subunit beta 1 (267 aa).

Residues Thr-9 to Gly-267 form the CoA carboxyltransferase N-terminal domain. Zn(2+) contacts are provided by Cys-13, Cys-16, Cys-31, and Cys-34. The C4-type zinc-finger motif lies at Cys-13 to Cys-34.

The protein belongs to the AccD/PCCB family. Acetyl-CoA carboxylase is a heterohexamer composed of biotin carboxyl carrier protein (AccB), biotin carboxylase (AccC) and two subunits each of ACCase subunit alpha (AccA) and ACCase subunit beta (AccD). The cofactor is Zn(2+).

It is found in the cytoplasm. It catalyses the reaction N(6)-carboxybiotinyl-L-lysyl-[protein] + acetyl-CoA = N(6)-biotinyl-L-lysyl-[protein] + malonyl-CoA. The protein operates within lipid metabolism; malonyl-CoA biosynthesis; malonyl-CoA from acetyl-CoA: step 1/1. Component of the acetyl coenzyme A carboxylase (ACC) complex. Biotin carboxylase (BC) catalyzes the carboxylation of biotin on its carrier protein (BCCP) and then the CO(2) group is transferred by the transcarboxylase to acetyl-CoA to form malonyl-CoA. This chain is Acetyl-coenzyme A carboxylase carboxyl transferase subunit beta 1, found in Lactiplantibacillus plantarum (strain JDM1) (Lactobacillus plantarum).